The primary structure comprises 260 residues: Exosome complex component Rrp42 (260 aa).

This sequence belongs to the RNase PH family. Rrp42 subfamily. Component of the archaeal exosome complex. Forms a hexameric ring-like arrangement composed of 3 Rrp41-Rrp42 heterodimers. The hexameric ring associates with a trimer of Rrp4 and/or Csl4 subunits.

It is found in the cytoplasm. In terms of biological role, non-catalytic component of the exosome, which is a complex involved in RNA degradation. Contributes to the structuring of the Rrp41 active site. This is Exosome complex component Rrp42 from Thermoplasma volcanium (strain ATCC 51530 / DSM 4299 / JCM 9571 / NBRC 15438 / GSS1).